A 100-amino-acid polypeptide reads, in one-letter code: Urease subunit gamma (100 aa).

Belongs to the urease gamma subunit family. In terms of assembly, heterotrimer of UreA (gamma), UreB (beta) and UreC (alpha) subunits. Three heterotrimers associate to form the active enzyme.

It localises to the cytoplasm. The enzyme catalyses urea + 2 H2O + H(+) = hydrogencarbonate + 2 NH4(+). It participates in nitrogen metabolism; urea degradation; CO(2) and NH(3) from urea (urease route): step 1/1. In Dinoroseobacter shibae (strain DSM 16493 / NCIMB 14021 / DFL 12), this protein is Urease subunit gamma.